Consider the following 89-residue polypeptide: MAKKSKVAKHERQQALVEQYAELRRTLKAEGRYDELRKLPRDSSPSRLHNRCELTGRPHGYMRKFGISRIRFRELAHQGQLPGVTKASW.

It belongs to the universal ribosomal protein uS14 family. Part of the 30S ribosomal subunit. Contacts proteins S3 and S10.

In terms of biological role, binds 16S rRNA, required for the assembly of 30S particles and may also be responsible for determining the conformation of the 16S rRNA at the A site. The protein is Small ribosomal subunit protein uS14A of Listeria monocytogenes serotype 4b (strain F2365).